A 399-amino-acid polypeptide reads, in one-letter code: Exodeoxyribonuclease 7 large subunit (399 aa).

The protein belongs to the XseA family. Heterooligomer composed of large and small subunits.

The protein localises to the cytoplasm. It catalyses the reaction Exonucleolytic cleavage in either 5'- to 3'- or 3'- to 5'-direction to yield nucleoside 5'-phosphates.. In terms of biological role, bidirectionally degrades single-stranded DNA into large acid-insoluble oligonucleotides, which are then degraded further into small acid-soluble oligonucleotides. In Clostridium beijerinckii (strain ATCC 51743 / NCIMB 8052) (Clostridium acetobutylicum), this protein is Exodeoxyribonuclease 7 large subunit.